A 116-amino-acid polypeptide reads, in one-letter code: Large ribosomal subunit protein bL20 (116 aa).

Belongs to the bacterial ribosomal protein bL20 family.

In terms of biological role, binds directly to 23S ribosomal RNA and is necessary for the in vitro assembly process of the 50S ribosomal subunit. It is not involved in the protein synthesizing functions of that subunit. This Fusobacterium nucleatum subsp. nucleatum (strain ATCC 25586 / DSM 15643 / BCRC 10681 / CIP 101130 / JCM 8532 / KCTC 2640 / LMG 13131 / VPI 4355) protein is Large ribosomal subunit protein bL20.